We begin with the raw amino-acid sequence, 84 residues long: PAMP-induced secreted peptide 2 (84 aa).

Positions 1–24 are cleaved as a signal peptide; that stretch reads MMMNKNVLSSILFFMLIGSVLVES. Residues 50 to 84 are disordered; sequence KDSGPSPGEGHKVVDRKDTFRFVKHSGPSPSGPGH. Basic and acidic residues predominate over residues 58 to 70; that stretch reads EGHKVVDRKDTFR. 4-hydroxyproline is present on residues P77 and P79.

Post-translationally, contains 4-hydroxyproline; hydroxylated on Pro-77 and Pro-79.

The protein localises to the secreted. It is found in the extracellular space. Its subcellular location is the apoplast. Endogenous secreted peptide that acts as elicitor of immune response and positive regulator of defense response. Amplifies the immune response triggered by flg22, the active epitope of bacterial flagellin. Acts as a negative regulator of root growth. This Arabidopsis thaliana (Mouse-ear cress) protein is PAMP-induced secreted peptide 2.